The following is a 412-amino-acid chain: Phosphoribosylamine--glycine ligase (412 aa).

The ATP-grasp domain occupies 108–309; sequence KSIMKKYGVP…LAQAIIDILA (202 aa). 134-190 contributes to the ATP binding site; that stretch reads LDEKGVPLVIKADGLAAGKGVTVAFDIETAKSALADIFSGSQGKVVIEEFLDGEEFS. Mg(2+)-binding residues include E279 and N281.

The protein belongs to the GARS family. Mg(2+) serves as cofactor. Mn(2+) is required as a cofactor.

The enzyme catalyses 5-phospho-beta-D-ribosylamine + glycine + ATP = N(1)-(5-phospho-beta-D-ribosyl)glycinamide + ADP + phosphate + H(+). The protein operates within purine metabolism; IMP biosynthesis via de novo pathway; N(1)-(5-phospho-D-ribosyl)glycinamide from 5-phospho-alpha-D-ribose 1-diphosphate: step 2/2. The sequence is that of Phosphoribosylamine--glycine ligase from Lactococcus lactis subsp. lactis (strain IL1403) (Streptococcus lactis).